We begin with the raw amino-acid sequence, 143 residues long: Flagellar assembly factor FliW (143 aa).

It belongs to the FliW family. In terms of assembly, interacts with translational regulator CsrA and flagellin(s).

The protein resides in the cytoplasm. Acts as an anti-CsrA protein, binds CsrA and prevents it from repressing translation of its target genes, one of which is flagellin. Binds to flagellin and participates in the assembly of the flagellum. This Clostridium botulinum (strain ATCC 19397 / Type A) protein is Flagellar assembly factor FliW.